The chain runs to 1047 residues: Atrial natriuretic peptide receptor 2 (1047 aa).

The signal sequence occupies residues 1 to 22 (MALPSLLLLVAALAGGVRPPGA). The Extracellular segment spans residues 23–458 (RNLTLAVVLP…DKTPLSTLAI (436 aa)). 2 N-linked (GlcNAc...) asparagine glycosylation sites follow: Asn24 and Asn35. The cysteines at positions 75 and 101 are disulfide-linked. Residues Asn161, Asn195, Asn244, Asn277, and Asn349 are each glycosylated (N-linked (GlcNAc...) asparagine). A helical transmembrane segment spans residues 459–478 (VALGTGITFIMFGVSSFLIF). The Cytoplasmic portion of the chain corresponds to 479–1047 (RKLMLEKELA…GERKGPPGLL (569 aa)). Phosphoserine is present on Ser513. A Protein kinase domain is found at 513 to 786 (SRLTLSLRGS…PDFGQIKGFI (274 aa)). Phosphothreonine is present on Thr516. Residues Ser518, Ser522, Ser523, and Ser526 each carry the phosphoserine modification. At Thr529 the chain carries Phosphothreonine. The 131-residue stretch at 861–991 (TIYFSDIVGF…DTVNTASRME (131 aa)) folds into the Guanylate cyclase domain.

It belongs to the adenylyl cyclase class-4/guanylyl cyclase family. Post-translationally, phosphorylated. Phosphorylation of the protein kinase-like domain is required for full activation by CNP. Glycosylated.

The protein resides in the cell membrane. It catalyses the reaction GTP = 3',5'-cyclic GMP + diphosphate. Functionally, receptor for the C-type natriuretic peptide NPPC/CNP hormone. Has guanylate cyclase activity upon binding of its ligand. May play a role in the regulation of skeletal growth. In Homo sapiens (Human), this protein is Atrial natriuretic peptide receptor 2 (NPR2).